We begin with the raw amino-acid sequence, 349 residues long: Delta(7)-sterol 5(6)-desaturase ERG3A (349 aa).

Helical transmembrane passes span 84–104 (ITWI…YIFI), 124–144 (IIAA…FFLL), and 162–182 (LWYD…CIYW). The Fatty acid hydroxylase domain occupies 170–296 (PLFLLFTDFC…FTAFDRMGGT (127 aa)). The short motif at 184–188 (HRWLH) is the Histidine box-1 element. Residues 197–201 (HKLHH) carry the Histidine box-2 motif. A helical transmembrane segment spans residues 227–247 (HIFPFIFPLQKMAYVALFVFV). Positions 272–276 (HSLHH) match the Histidine box-3 motif.

It belongs to the sterol desaturase family.

The protein localises to the endoplasmic reticulum membrane. It catalyses the reaction episterol + 2 Fe(II)-[cytochrome b5] + O2 + 2 H(+) = 5-dehydroepisterol + 2 Fe(III)-[cytochrome b5] + 2 H2O. It participates in steroid metabolism; ergosterol biosynthesis. In terms of biological role, C-5 sterol desaturase; part of the third module of ergosterol biosynthesis pathway that includes the late steps of the pathway. ERG3A and ERG3BB catalyze the introduction of a C-5 double bond in the B ring to produce 5-dehydroepisterol. The third module or late pathway involves the ergosterol synthesis itself through consecutive reactions that mainly occur in the endoplasmic reticulum (ER) membrane. Firstly, the squalene synthase ERG9 catalyzes the condensation of 2 farnesyl pyrophosphate moieties to form squalene, which is the precursor of all steroids. Squalene synthase is crucial for balancing the incorporation of farnesyl diphosphate (FPP) into sterol and nonsterol isoprene synthesis. Secondly, squalene is converted into lanosterol by the consecutive action of the squalene epoxidase ERG1 and the lanosterol synthase ERG7. Then, the delta(24)-sterol C-methyltransferase ERG6 methylates lanosterol at C-24 to produce eburicol. Eburicol is the substrate of the sterol 14-alpha demethylase encoded by CYP51A, CYP51B and CYP51C, to yield 4,4,24-trimethyl ergosta-8,14,24(28)-trienol. CYP51B encodes the enzyme primarily responsible for sterol 14-alpha-demethylation, and plays an essential role in ascospore formation. CYP51A encodes an additional sterol 14-alpha-demethylase, induced on ergosterol depletion and responsible for the intrinsic variation in azole sensitivity. The third CYP51 isoform, CYP51C, does not encode a sterol 14-alpha-demethylase, but is required for full virulence on host wheat ears. The C-14 reductase ERG24 then reduces the C14=C15 double bond which leads to 4,4-dimethylfecosterol. A sequence of further demethylations at C-4, involving the C-4 demethylation complex containing the C-4 methylsterol oxidases ERG25, the sterol-4-alpha-carboxylate 3-dehydrogenase ERG26 and the 3-keto-steroid reductase ERG27, leads to the production of fecosterol via 4-methylfecosterol. ERG28 has a role as a scaffold to help anchor ERG25, ERG26 and ERG27 to the endoplasmic reticulum. The C-8 sterol isomerase ERG2 then catalyzes the reaction which results in unsaturation at C-7 in the B ring of sterols and thus converts fecosterol to episterol. The sterol-C5-desaturases ERG3A and ERG3BB then catalyze the introduction of a C-5 double bond in the B ring to produce 5-dehydroepisterol. The C-22 sterol desaturases ERG5A and ERG5B further convert 5-dehydroepisterol into ergosta-5,7,22,24(28)-tetraen-3beta-ol by forming the C-22(23) double bond in the sterol side chain. Finally, ergosta-5,7,22,24(28)-tetraen-3beta-ol is substrate of the C-24(28) sterol reductase ERG4 to produce ergosterol. This is Delta(7)-sterol 5(6)-desaturase ERG3A from Gibberella zeae (strain ATCC MYA-4620 / CBS 123657 / FGSC 9075 / NRRL 31084 / PH-1) (Wheat head blight fungus).